The following is a 380-amino-acid chain: Anthranilate phosphoribosyltransferase (380 aa).

5-phospho-alpha-D-ribose 1-diphosphate-binding residues include Gly-109, Asn-119, Ser-121, Thr-122, Lys-142, Ser-144, and Ser-146. Mg(2+) contacts are provided by Asp-258 and Glu-259.

The protein belongs to the anthranilate phosphoribosyltransferase family. Homodimer. Mg(2+) serves as cofactor.

It catalyses the reaction N-(5-phospho-beta-D-ribosyl)anthranilate + diphosphate = 5-phospho-alpha-D-ribose 1-diphosphate + anthranilate. The protein operates within amino-acid biosynthesis; L-tryptophan biosynthesis; L-tryptophan from chorismate: step 2/5. Its function is as follows. Catalyzes the transfer of the phosphoribosyl group of 5-phosphorylribose-1-pyrophosphate (PRPP) to anthranilate to yield N-(5'-phosphoribosyl)-anthranilate (PRA), the second step in tryptophan biosynthesis. The sequence is that of Anthranilate phosphoribosyltransferase from Saccharomyces cerevisiae (strain ATCC 204508 / S288c) (Baker's yeast).